The primary structure comprises 703 residues: Polyribonucleotide nucleotidyltransferase (703 aa).

Mg(2+)-binding residues include D482 and D488. One can recognise a KH domain in the interval 549-607 (PKAQVMKIPEDKVGLVIGPAGKNIKYIKEQFGASVWIDGANAYINAPTIEAVNKAADFI). The S1 motif domain occupies 617–679 (GGVYEGKVIR…EQNRLNLCSP (63 aa)). A disordered region spans residues 677–703 (CSPDYQKPENQERPRKEQLNRKPHHRK). Over residues 682–696 (QKPENQERPRKEQLN) the composition is skewed to basic and acidic residues.

It belongs to the polyribonucleotide nucleotidyltransferase family. Requires Mg(2+) as cofactor.

Its subcellular location is the cytoplasm. The enzyme catalyses RNA(n+1) + phosphate = RNA(n) + a ribonucleoside 5'-diphosphate. Its function is as follows. Involved in mRNA degradation. Catalyzes the phosphorolysis of single-stranded polyribonucleotides processively in the 3'- to 5'-direction. This Hydrogenobaculum sp. (strain Y04AAS1) protein is Polyribonucleotide nucleotidyltransferase.